The following is a 460-amino-acid chain: Protein Peter pan (460 aa).

Residues 28 to 290 (PHSFVIHRGL…LIKIEEGLLT (263 aa)) form the Brix domain. A phosphoserine mark is found at S237 and S239. Residues 295-350 (YHDHVVKTEDEKETLRKLVEKKRKQKEQRKKEQAENRARNLKLKKDEKWAAKRAAE) are a coiled coil. A disordered region spans residues 315–460 (KKRKQKEQRK…FDHRKSRKSK (146 aa)). 2 stretches are compositionally biased toward basic and acidic residues: residues 323–355 (RKKEQAENRARNLKLKKDEKWAAKRAAEGRTDS) and 401–446 (AKLD…DPKN). At T353 the chain carries Phosphothreonine. S355 is subject to Phosphoserine. Residues 447–460 (KRAKFDHRKSRKSK) show a composition bias toward basic residues.

This sequence belongs to the PPAN family. As to expression, ubiquitous.

In terms of biological role, required for initiation of larval growth and normal mitotic growth but is not absolutely required for general biosynthesis or DNA replication. Required for progression of normal oogenesis and maturation of some imaginal tissues into adult structures. The polypeptide is Protein Peter pan (ppan) (Drosophila melanogaster (Fruit fly)).